The sequence spans 625 residues: Glutamyl-tRNA(Gln) amidotransferase subunit E (625 aa).

It belongs to the GatB/GatE family. GatE subfamily. As to quaternary structure, heterodimer of GatD and GatE.

It carries out the reaction L-glutamyl-tRNA(Gln) + L-glutamine + ATP + H2O = L-glutaminyl-tRNA(Gln) + L-glutamate + ADP + phosphate + H(+). In terms of biological role, allows the formation of correctly charged Gln-tRNA(Gln) through the transamidation of misacylated Glu-tRNA(Gln) in organisms which lack glutaminyl-tRNA synthetase. The reaction takes place in the presence of glutamine and ATP through an activated gamma-phospho-Glu-tRNA(Gln). The GatDE system is specific for glutamate and does not act on aspartate. This Caldivirga maquilingensis (strain ATCC 700844 / DSM 13496 / JCM 10307 / IC-167) protein is Glutamyl-tRNA(Gln) amidotransferase subunit E.